We begin with the raw amino-acid sequence, 225 residues long: GrpE protein homolog 2, mitochondrial (225 aa).

A mitochondrion-targeting transit peptide spans 1 to 32 (MAVRSLWACRLRVQRLLAWSAAWESKGWPLPF). Lysine 142 carries the post-translational modification N6-acetyllysine.

Belongs to the GrpE family. Probable component of the PAM complex at least composed of a mitochondrial HSP70 protein, GRPEL1 or GRPEL2, TIMM44, TIMM16/PAM16 and TIMM14/DNAJC19.

It localises to the mitochondrion matrix. In terms of biological role, essential component of the PAM complex, a complex required for the translocation of transit peptide-containing proteins from the inner membrane into the mitochondrial matrix in an ATP-dependent manner. Seems to control the nucleotide-dependent binding of mitochondrial HSP70 to substrate proteins. Stimulates ATPase activity of mt-HSP70. May also serve to modulate the interconversion of oligomeric (inactive) and monomeric (active) forms of mt-HSP70. This chain is GrpE protein homolog 2, mitochondrial (GRPEL2), found in Pongo abelii (Sumatran orangutan).